A 518-amino-acid chain; its full sequence is D-aminopeptidase (518 aa).

The active-site Nucleophile is the serine 62. The Proton donor/acceptor role is filled by lysine 65. The interval 373 to 392 is disordered; that stretch reads FGTGPEKMDISGENEAQSSM. The important for specificity stretch occupies residues 477–487; that stretch reads QRSMDAPSPGE. Aspartate 481 contributes to the substrate binding site.

It belongs to the peptidase S12 family. In terms of assembly, homodimer.

The enzyme catalyses Release of an N-terminal D-amino acid from a peptide, Xaa-|-Yaa-, in which Xaa is preferably D-Ala, D-Ser or D-Thr. D-amino acid amides and methyl esters also are hydrolyzed, as is glycine amide.. Its activity is regulated as follows. Inhibited by beta-lactam compounds such as 6-aminopenicillic acid, 7-aminocephalosporanic acid, benzylpenicillin and ampicillin. Inhibited by p-chloromercuribenzoate. Its function is as follows. Hydrolyzes N-terminal residues in D-amino acid-containing peptides. This Brucella melitensis biotype 2 (strain ATCC 23457) protein is D-aminopeptidase.